Reading from the N-terminus, the 312-residue chain is Acetyl-coenzyme A carboxylase carboxyl transferase subunit alpha (312 aa).

A CoA carboxyltransferase C-terminal domain is found at 36 to 286 (NLEKEISKTY…ADYVKKSLNE (251 aa)).

Belongs to the AccA family. In terms of assembly, acetyl-CoA carboxylase is a heterohexamer composed of biotin carboxyl carrier protein (AccB), biotin carboxylase (AccC) and two subunits each of ACCase subunit alpha (AccA) and ACCase subunit beta (AccD).

It is found in the cytoplasm. It carries out the reaction N(6)-carboxybiotinyl-L-lysyl-[protein] + acetyl-CoA = N(6)-biotinyl-L-lysyl-[protein] + malonyl-CoA. The protein operates within lipid metabolism; malonyl-CoA biosynthesis; malonyl-CoA from acetyl-CoA: step 1/1. Its function is as follows. Component of the acetyl coenzyme A carboxylase (ACC) complex. First, biotin carboxylase catalyzes the carboxylation of biotin on its carrier protein (BCCP) and then the CO(2) group is transferred by the carboxyltransferase to acetyl-CoA to form malonyl-CoA. This chain is Acetyl-coenzyme A carboxylase carboxyl transferase subunit alpha, found in Campylobacter jejuni (strain RM1221).